Reading from the N-terminus, the 546-residue chain is ATP-dependent RNA helicase DBP2 (546 aa).

The tract at residues 1–56 (MTYGGRDQQYNKTNYKSRGGDFRGGRNSDRNSYNDRPQGGNYRGGFGGRSNYNQPQ) is disordered. R18 and R43 each carry omega-N-methylarginine. Positions 18-33 (RGGDFRGGRNSDRNSY) are enriched in basic and acidic residues. Phosphoserine is present on residues S88 and S90. Positions 113-141 (TTFDEAGFPDYVLNEVKAEGFDKPTGIQC) match the Q motif motif. The 176-residue stretch at 144–319 (WPMALSGRDM…ADYLNDPIQV (176 aa)) folds into the Helicase ATP-binding domain. Residue 157–164 (AATGSGKT) coordinates ATP. The DEAD box motif lies at 267–270 (DEAD). Residues 347–494 (RLNKYLETAS…NIPPELLKYD (148 aa)) form the Helicase C-terminal domain. Residue K474 forms a Glycyl lysine isopeptide (Lys-Gly) (interchain with G-Cter in ubiquitin) linkage. Residues 493–546 (YDRRSYGGGHPRYGGGRGGRGGYGRRGGYGGGRGGYGGNRQRDGGWGNRGRSNY) form a disordered region. A compositionally biased stretch (gly residues) spans 498–540 (YGGGHPRYGGGRGGRGGYGRRGGYGGGRGGYGGNRQRDGGWGN). Residues 505 to 530 (YGGGRGGRGGYGRRGGYGGGRGGYGG) form an RNA-binding RGG-box region. R509, R512, R518, and R525 each carry dimethylated arginine; alternate. Omega-N-methylarginine; alternate occurs at positions 509, 512, 518, and 525.

Belongs to the DEAD box helicase family. DDX5/DBP2 subfamily. As to quaternary structure, interacts with UPF1. Associates with polysomes.

It localises to the cytoplasm. It is found in the nucleus. It carries out the reaction ATP + H2O = ADP + phosphate + H(+). Its function is as follows. ATP-dependent RNA helicase involved nonsense-mediated mRNA decay and ribosome biogenesis through rRNA processing. Associates directly with chromatin, correlating with transcriptional activity. Required for assembly of mRNA-binding proteins YRA1, NAB2, and MEX67 onto poly(A)+ RNA. The chain is ATP-dependent RNA helicase DBP2 from Saccharomyces cerevisiae (strain ATCC 204508 / S288c) (Baker's yeast).